A 480-amino-acid polypeptide reads, in one-letter code: MGCNKRGVTRQEDDFSAWYNEVVAKAGLIDRGPAKGTMVIRPYGYRIWELLQDELDSKIKELGHENAYFPMLIPENYFNREAEHVEGFHPELAVVTHAGGKELSEPLVIRPTSETVIGDMMAKWITSHRDLPLRLNQWSNVVRWELRPRMLLRTIEFLWQEGHSAHIEKSDALRETLFALDIYTTLARDMAAIPIVSGEKTAGERFAGALNTYTIEAMMRDGKALQSATTHYLGDNFARAFNIRYTTAEEQQAFVHTTSFGLSTRMIGAIVMVHGDDKGLVLPPQVAPYQVVIVPITTGNKASEVGHAAADLARRLQAAGVRTHVDARPQLTPGWKYNEWELRGVPIRLELGPRDLEAGTTVMVRRIGEKAKQPIAIAAAPTELPGILEEFQRTLLERATQFRDDHTTLVDNWDAFATTVATGWALAIHCGNPECEEDIKAETAATPRCVPRQGAPATGRCIRCDAPSAYDKRVIFARAY.

The protein belongs to the class-II aminoacyl-tRNA synthetase family. ProS type 3 subfamily. In terms of assembly, homodimer.

It localises to the cytoplasm. It carries out the reaction tRNA(Pro) + L-proline + ATP = L-prolyl-tRNA(Pro) + AMP + diphosphate. In terms of biological role, catalyzes the attachment of proline to tRNA(Pro) in a two-step reaction: proline is first activated by ATP to form Pro-AMP and then transferred to the acceptor end of tRNA(Pro). In Mycobacterium leprae (strain Br4923), this protein is Proline--tRNA ligase.